Consider the following 255-residue polypeptide: Small ribosomal subunit protein eS1 (255 aa).

Basic residues predominate over residues 1-18; that stretch reads MAVGKNKRLSKGKKGLKK. The segment at 1 to 28 is disordered; sequence MAVGKNKRLSKGKKGLKKRTQDPFSRKD. Ala-2 carries the post-translational modification N-acetylalanine; partial. Residues 19 to 28 are compositionally biased toward basic and acidic residues; sequence RTQDPFSRKD.

Belongs to the eukaryotic ribosomal protein eS1 family. As to quaternary structure, component of the small ribosomal subunit. Mature ribosomes consist of a small (40S) and a large (60S) subunit. The 40S subunit contains about 33 different proteins and 1 molecule of RNA (18S). The 60S subunit contains about 49 different proteins and 3 molecules of RNA (25S, 5.8S and 5S).

The protein localises to the cytoplasm. The sequence is that of Small ribosomal subunit protein eS1 from Ajellomyces capsulatus (strain H143) (Darling's disease fungus).